A 120-amino-acid polypeptide reads, in one-letter code: Large ribosomal subunit protein uL22 (120 aa).

Residues 1–20 (MFVNRRYTARGKNLPSSPKK) are disordered.

It belongs to the universal ribosomal protein uL22 family. As to quaternary structure, part of the 50S ribosomal subunit.

This protein binds specifically to 23S rRNA; its binding is stimulated by other ribosomal proteins, e.g. L4, L17, and L20. It is important during the early stages of 50S assembly. It makes multiple contacts with different domains of the 23S rRNA in the assembled 50S subunit and ribosome. Its function is as follows. The globular domain of the protein is located near the polypeptide exit tunnel on the outside of the subunit, while an extended beta-hairpin is found that lines the wall of the exit tunnel in the center of the 70S ribosome. The chain is Large ribosomal subunit protein uL22 from Borrelia hermsii (strain HS1 / DAH).